The sequence spans 257 residues: Phosphatidylglycerol--prolipoprotein diacylglyceryl transferase (257 aa).

Helical transmembrane passes span 13-33, 49-69, 88-108, 123-143, 152-172, 186-202, and 223-243; these read FGPI…AVGG, FLLN…RLMF, IYEG…AGLY, FAVV…IFNH, FFFG…FLLI, YQFW…RGVF, and IGLF…AYWM. Residue Arg-136 coordinates a 1,2-diacyl-sn-glycero-3-phospho-(1'-sn-glycerol).

This sequence belongs to the Lgt family.

It is found in the cell membrane. The catalysed reaction is L-cysteinyl-[prolipoprotein] + a 1,2-diacyl-sn-glycero-3-phospho-(1'-sn-glycerol) = an S-1,2-diacyl-sn-glyceryl-L-cysteinyl-[prolipoprotein] + sn-glycerol 1-phosphate + H(+). It functions in the pathway protein modification; lipoprotein biosynthesis (diacylglyceryl transfer). Functionally, catalyzes the transfer of the diacylglyceryl group from phosphatidylglycerol to the sulfhydryl group of the N-terminal cysteine of a prolipoprotein, the first step in the formation of mature lipoproteins. The sequence is that of Phosphatidylglycerol--prolipoprotein diacylglyceryl transferase from Caldanaerobacter subterraneus subsp. tengcongensis (strain DSM 15242 / JCM 11007 / NBRC 100824 / MB4) (Thermoanaerobacter tengcongensis).